A 142-amino-acid polypeptide reads, in one-letter code: Large ribosomal subunit protein uL11 (142 aa).

It belongs to the universal ribosomal protein uL11 family. As to quaternary structure, part of the ribosomal stalk of the 50S ribosomal subunit. Interacts with L10 and the large rRNA to form the base of the stalk. L10 forms an elongated spine to which L12 dimers bind in a sequential fashion forming a multimeric L10(L12)X complex. Post-translationally, one or more lysine residues are methylated.

Functionally, forms part of the ribosomal stalk which helps the ribosome interact with GTP-bound translation factors. This chain is Large ribosomal subunit protein uL11, found in Xanthomonas oryzae pv. oryzae (strain MAFF 311018).